The primary structure comprises 232 residues: MKIGIIGAINQETERLKKIIHFYIEKKINTYKIYIGKFKSHDVFLIKSGIGKVSASVATMILIDLYKPDTIINSGSAGSLQSFLKIGDIIIPKKTCYYDVDLTNFGYTRGQIPGYPKEFTVNEKICNFFKKNADKYQLKYIKGLILSGDTFVRENESIKILKKQFPSAIAVEMESSAIAQVCYKFNIPLIIIKSISDESDNNATVNFKENIDFVSYQLSKFVKIILENLIDM.

E12 (proton acceptor) is an active-site residue. Substrate contacts are provided by residues G78, V152, and 173–174; that span reads ME. Residue D197 is the Proton donor of the active site.

Belongs to the PNP/UDP phosphorylase family. MtnN subfamily. As to quaternary structure, homodimer.

It catalyses the reaction S-adenosyl-L-homocysteine + H2O = S-(5-deoxy-D-ribos-5-yl)-L-homocysteine + adenine. It carries out the reaction S-methyl-5'-thioadenosine + H2O = 5-(methylsulfanyl)-D-ribose + adenine. The enzyme catalyses 5'-deoxyadenosine + H2O = 5-deoxy-D-ribose + adenine. It functions in the pathway amino-acid biosynthesis; L-methionine biosynthesis via salvage pathway; S-methyl-5-thio-alpha-D-ribose 1-phosphate from S-methyl-5'-thioadenosine (hydrolase route): step 1/2. Catalyzes the irreversible cleavage of the glycosidic bond in both 5'-methylthioadenosine (MTA) and S-adenosylhomocysteine (SAH/AdoHcy) to adenine and the corresponding thioribose, 5'-methylthioribose and S-ribosylhomocysteine, respectively. Also cleaves 5'-deoxyadenosine, a toxic by-product of radical S-adenosylmethionine (SAM) enzymes, into 5-deoxyribose and adenine. Thus, is required for in vivo function of the radical SAM enzymes biotin synthase and lipoic acid synthase, that are inhibited by 5'-deoxyadenosine accumulation. This Buchnera aphidicola subsp. Acyrthosiphon pisum (strain APS) (Acyrthosiphon pisum symbiotic bacterium) protein is 5'-methylthioadenosine/S-adenosylhomocysteine nucleosidase.